The sequence spans 463 residues: Asparagine--tRNA ligase (463 aa).

This sequence belongs to the class-II aminoacyl-tRNA synthetase family. In terms of assembly, homodimer.

The protein localises to the cytoplasm. It carries out the reaction tRNA(Asn) + L-asparagine + ATP = L-asparaginyl-tRNA(Asn) + AMP + diphosphate + H(+). The sequence is that of Asparagine--tRNA ligase from Clostridium botulinum (strain ATCC 19397 / Type A).